Consider the following 214-residue polypeptide: 3-isopropylmalate dehydratase small subunit (214 aa).

Belongs to the LeuD family. LeuD type 1 subfamily. In terms of assembly, heterodimer of LeuC and LeuD.

The catalysed reaction is (2R,3S)-3-isopropylmalate = (2S)-2-isopropylmalate. The protein operates within amino-acid biosynthesis; L-leucine biosynthesis; L-leucine from 3-methyl-2-oxobutanoate: step 2/4. Catalyzes the isomerization between 2-isopropylmalate and 3-isopropylmalate, via the formation of 2-isopropylmaleate. The chain is 3-isopropylmalate dehydratase small subunit from Desulforapulum autotrophicum (strain ATCC 43914 / DSM 3382 / VKM B-1955 / HRM2) (Desulfobacterium autotrophicum).